Here is a 560-residue protein sequence, read N- to C-terminus: Synaptotagmin-5 (560 aa).

A helical membrane pass occupies residues 2-22; sequence GFIVGVVIGLLVGIAIIIGFV. In terms of domain architecture, SMP-LTD spans 67-249; sequence ERQKLTWLNH…WPVRKVIPII (183 aa). Residues 227 to 523 are phospholipid binding; that stretch reads EETIRDAVED…YIGRCILTLT (297 aa). 2 C2 domains span residues 243 to 364 and 417 to 535; these read RKVI…DVWL and TTDE…KDWY. Positions 278, 284, 334, 336, 451, 457, 506, 508, and 513 each coordinate Ca(2+).

Belongs to the synaptotagmin family. The cofactor is Ca(2+).

Its subcellular location is the membrane. May be involved in membrane trafficking. The polypeptide is Synaptotagmin-5 (SYT5) (Arabidopsis thaliana (Mouse-ear cress)).